The following is a 247-amino-acid chain: E3 ubiquitin ligase TRIM40 (247 aa).

The segment at 12-55 (CPICLDPLKEAVSTDCRHLFCRMCLIRHMDKASVSGVLSCPVCR) adopts an RING-type zinc-finger fold. The segment at 64–105 (GDNYICHTHQKRVCRFCESSRHLLCEECLQSPEHRAHTELSI) adopts a B box-type zinc-finger fold. Residues Cys-69, His-72, Cys-91, and His-97 each contribute to the Zn(2+) site. Residues 111–148 (HYKERLNRRSRKLRKDLGDLQRLKAQEEKMLQALQVDW) adopt a coiled-coil conformation.

It belongs to the TRIM/RBCC family. As to quaternary structure, interacts with NEDD8.

The catalysed reaction is S-ubiquitinyl-[E2 ubiquitin-conjugating enzyme]-L-cysteine + [acceptor protein]-L-lysine = [E2 ubiquitin-conjugating enzyme]-L-cysteine + N(6)-ubiquitinyl-[acceptor protein]-L-lysine.. In terms of biological role, E3 ubiquitin-protein ligase that plays a role in the limitation of the innate immune response. Mediates inhibition of the RLR signaling pathway by ubiquitinating RIGI and IFIH1 receptors, leading to their proteasomal degradation. Also promotes the neddylation of IKBKG/NEMO, stabilizing NFKBIA, and thereby inhibiting of NF-kappa-B nuclear translocation and activation. This is E3 ubiquitin ligase TRIM40 (Trim40) from Rattus norvegicus (Rat).